The chain runs to 536 residues: Membrane protein insertase YidC (536 aa).

Residues 14-34 traverse the membrane as a helical segment; sequence ILIATAISLLFFIPYSYFFAP. Positions 43–69 are disordered; sequence STSMERAEQQAAPQTSSSPKEGQVSSV. Polar residues predominate over residues 53 to 68; the sequence is AAPQTSSSPKEGQVSS. 5 helical membrane passes run 312–332, 339–359, 401–421, 436–456, and 484–504; these read VVEY…LDWL, WGWA…PLTY, GANP…FFAI, WILW…PILM, and PLIF…YWFV.

This sequence belongs to the OXA1/ALB3/YidC family. Type 1 subfamily. As to quaternary structure, interacts with the Sec translocase complex via SecD. Specifically interacts with transmembrane segments of nascent integral membrane proteins during membrane integration.

It localises to the cell inner membrane. Functionally, required for the insertion and/or proper folding and/or complex formation of integral membrane proteins into the membrane. Involved in integration of membrane proteins that insert both dependently and independently of the Sec translocase complex, as well as at least some lipoproteins. Aids folding of multispanning membrane proteins. The chain is Membrane protein insertase YidC from Wolinella succinogenes (strain ATCC 29543 / DSM 1740 / CCUG 13145 / JCM 31913 / LMG 7466 / NCTC 11488 / FDC 602W) (Vibrio succinogenes).